The chain runs to 192 residues: Imidazoleglycerol-phosphate dehydratase (192 aa).

Belongs to the imidazoleglycerol-phosphate dehydratase family.

Its subcellular location is the cytoplasm. It carries out the reaction D-erythro-1-(imidazol-4-yl)glycerol 3-phosphate = 3-(imidazol-4-yl)-2-oxopropyl phosphate + H2O. Its pathway is amino-acid biosynthesis; L-histidine biosynthesis; L-histidine from 5-phospho-alpha-D-ribose 1-diphosphate: step 6/9. The sequence is that of Imidazoleglycerol-phosphate dehydratase from Clostridioides difficile (strain 630) (Peptoclostridium difficile).